The sequence spans 277 residues: MGIRRYKPTTPGRRGASVADFVEITRDHPEKSLVRPLHSKGGRNVHGRITTRHQGGGHKRAYRVIDFRRDKDGVPAKVAHIEYDPNRTARIALLHYLDGEKRYILAPVKLRQGDTVSSGVGADIKPGNALPLRNIPTGTVVHAIELRPGGGAKIARSAGTSVQLVAKDGPYAQLRMPSGEIRNVDVRCRATVGEVGNAEQSNINWGKAGRMRWKGRRPTVRGVAMNPVDHPHGGGEGKTSGGRHPVNPKGRPEGRTRATRKSSDALIVRRRKQNRRR.

2 disordered regions span residues 35 to 57 and 222 to 277; these read RPLH…QGGG and GVAM…NRRR. 2 stretches are compositionally biased toward basic residues: residues 37–57 and 268–277; these read LHSK…QGGG and VRRRKQNRRR.

This sequence belongs to the universal ribosomal protein uL2 family. In terms of assembly, part of the 50S ribosomal subunit. Forms a bridge to the 30S subunit in the 70S ribosome.

In terms of biological role, one of the primary rRNA binding proteins. Required for association of the 30S and 50S subunits to form the 70S ribosome, for tRNA binding and peptide bond formation. It has been suggested to have peptidyltransferase activity; this is somewhat controversial. Makes several contacts with the 16S rRNA in the 70S ribosome. The protein is Large ribosomal subunit protein uL2 of Frankia casuarinae (strain DSM 45818 / CECT 9043 / HFP020203 / CcI3).